Reading from the N-terminus, the 404-residue chain is MSKHPANSSATDPVDNLQTLIRCPSVTPAEGGALSALAAMLEPLGFTVERMVAREEGTPDVENLYARLGTEGPHLMFAGHTDVVPVGNEADWTYPPFSAEIAGGELYGRGAVDMKGGIACFVAAIARHIESQGAPKGSISFLITGDEEGPSINGTTKLLEWAAAKGERWDACLVGEPTNPDQLGDMIKIGRRGSLSGEIIVKGVQGHAAYPHLADNPVRGMIKLAEALMHPAFDAGTENFQPSNLEVTTIDVGNAATNVIPARASAKFNIRFNDTWTAETLRTEIIARLDTASADPLLRPGRPPIAYELVWADRPSQVFLTRNNALISSLSAAIEKMTGKTPALSTTGGTSDARFIKDYCPVVEFGLVGQTMHMVDERVAVSDLEALTGIYGAFISSWFTHAGA.

His-80 lines the Zn(2+) pocket. Asp-82 is a catalytic residue. Asp-113 is a binding site for Zn(2+). Glu-147 acts as the Proton acceptor in catalysis. Residues Glu-148, Glu-176, and His-373 each coordinate Zn(2+).

Belongs to the peptidase M20A family. DapE subfamily. As to quaternary structure, homodimer. Requires Zn(2+) as cofactor. Co(2+) serves as cofactor.

It carries out the reaction N-succinyl-(2S,6S)-2,6-diaminopimelate + H2O = (2S,6S)-2,6-diaminopimelate + succinate. The protein operates within amino-acid biosynthesis; L-lysine biosynthesis via DAP pathway; LL-2,6-diaminopimelate from (S)-tetrahydrodipicolinate (succinylase route): step 3/3. Its function is as follows. Catalyzes the hydrolysis of N-succinyl-L,L-diaminopimelic acid (SDAP), forming succinate and LL-2,6-diaminopimelate (DAP), an intermediate involved in the bacterial biosynthesis of lysine and meso-diaminopimelic acid, an essential component of bacterial cell walls. The chain is Succinyl-diaminopimelate desuccinylase from Allorhizobium ampelinum (strain ATCC BAA-846 / DSM 112012 / S4) (Agrobacterium vitis (strain S4)).